The sequence spans 339 residues: Protein-arginine kinase (339 aa).

The 229-residue stretch at 14–242 (IVINSNISLS…LNVISEEKKF (229 aa)) folds into the Phosphagen kinase C-terminal domain. Residues 17–21 (NSNIS), 164–168 (RASVN), and 195–200 (KGLYEE) each bind ATP.

It belongs to the ATP:guanido phosphotransferase family.

It catalyses the reaction L-arginyl-[protein] + ATP = N(omega)-phospho-L-arginyl-[protein] + ADP + H(+). Functionally, catalyzes the specific phosphorylation of arginine residues in proteins. This Clostridium botulinum (strain Eklund 17B / Type B) protein is Protein-arginine kinase.